The primary structure comprises 35 residues: Photosystem II reaction center protein M (35 aa).

Residues glycine 7 to valine 27 traverse the membrane as a helical segment.

This sequence belongs to the PsbM family. PSII is composed of 1 copy each of membrane proteins PsbA, PsbB, PsbC, PsbD, PsbE, PsbF, PsbH, PsbI, PsbJ, PsbK, PsbL, PsbM, PsbT, PsbX, PsbY, PsbZ, Psb30/Ycf12, peripheral proteins PsbO, CyanoQ (PsbQ), PsbU, PsbV and a large number of cofactors. It forms dimeric complexes.

The protein localises to the cellular thylakoid membrane. In terms of biological role, one of the components of the core complex of photosystem II (PSII). PSII is a light-driven water:plastoquinone oxidoreductase that uses light energy to abstract electrons from H(2)O, generating O(2) and a proton gradient subsequently used for ATP formation. It consists of a core antenna complex that captures photons, and an electron transfer chain that converts photonic excitation into a charge separation. This subunit is found at the monomer-monomer interface. The polypeptide is Photosystem II reaction center protein M (Synechococcus sp. (strain JA-3-3Ab) (Cyanobacteria bacterium Yellowstone A-Prime)).